The chain runs to 153 residues: Transcriptional repressor NrdR (153 aa).

The segment at 3 to 34 (CPFCGYEDTRVLDSRELSEGRAIRRRRECPQC) is a zinc-finger region. One can recognise an ATP-cone domain in the interval 49–139 (ITVIKKDGRR…VYKDFREIDQ (91 aa)).

It belongs to the NrdR family. Requires Zn(2+) as cofactor.

Functionally, negatively regulates transcription of bacterial ribonucleotide reductase nrd genes and operons by binding to NrdR-boxes. The sequence is that of Transcriptional repressor NrdR from Fervidobacterium nodosum (strain ATCC 35602 / DSM 5306 / Rt17-B1).